Consider the following 338-residue polypeptide: uncharacterized protein (338 aa).

The tract at residues 1–20 (MYNNNQNHHNNDNNMNKDEP) is disordered. Residues 9-20 (HNNDNNMNKDEP) show a composition bias toward basic and acidic residues. N-linked (GlcNAc...) asparagine glycosylation is found at Asn-37, Asn-83, Asn-97, Asn-105, Asn-114, and Asn-122. Residues 55–92 (VNSGNNNNNNNNNNNNNNNNNNNNNNNNNDSIVINMDT) are disordered. Over residues 59 to 92 (NNNNNNNNNNNNNNNNNNNNNNNNNDSIVINMDT) the composition is skewed to low complexity. Transmembrane regions (helical) follow at residues 148-168 (YKKF…IVLI), 178-198 (FHAY…FLLI), and 202-222 (ILSI…FLKV). Asn-229, Asn-240, Asn-286, Asn-302, Asn-317, and Asn-322 each carry an N-linked (GlcNAc...) asparagine glycan. 2 disordered regions span residues 279 to 303 (SNLN…NSNS) and 316 to 338 (LNSS…TNEE). Residues 280–294 (NLNRNNNNSNNVNNN) show a composition bias toward low complexity. A compositionally biased stretch (low complexity) spans 316-327 (LNSSGSNSSIYS). Residues 328 to 338 (DVQNDIGTNEE) show a composition bias toward polar residues.

It is found in the membrane. This is an uncharacterized protein from Dictyostelium discoideum (Social amoeba).